Consider the following 434-residue polypeptide: Protein maelstrom homolog (434 aa).

A DNA-binding region (HMG box) is located at residues 4–73 (RRASRNAYYF…AQGKDSGPSE (70 aa)).

Belongs to the maelstrom family. In terms of assembly, interacts with SMARCB1, SIN3B and DDX4. Interacts with piRNA-associated proteins TDRD1, PIWIL1 and PIWIL2. Interacts with Tex19.1 and, probably, Tex19.2. As to expression, testis-specific. Present in spermatocytes and round and early elongating spermatids.

It localises to the cytoplasm. It is found in the nucleus. Functionally, plays a central role during spermatogenesis by repressing transposable elements and preventing their mobilization, which is essential for the germline integrity. Acts via the piRNA metabolic process, which mediates the repression of transposable elements during meiosis by forming complexes composed of piRNAs and Piwi proteins and governs the methylation and subsequent repression of transposons. Its association with piP-bodies suggests a participation in the secondary piRNAs metabolic process. Required for the localization of germ-cell factors to the meiotic nuage. This is Protein maelstrom homolog from Mus musculus (Mouse).